The sequence spans 138 residues: Acidic phospholipase A2 1 (138 aa).

An N-terminal signal peptide occupies residues 1-16; the sequence is MRTLWIMAVLLVGVDG. Disulfide bonds link cysteine 42–cysteine 131, cysteine 44–cysteine 60, cysteine 59–cysteine 110, cysteine 65–cysteine 138, cysteine 66–cysteine 103, cysteine 73–cysteine 97, and cysteine 91–cysteine 101. 3 residues coordinate Ca(2+): tyrosine 43, glycine 45, and glycine 47. The active site involves histidine 63. Position 64 (aspartate 64) interacts with Ca(2+). Aspartate 104 is an active-site residue.

The protein belongs to the phospholipase A2 family. Group II subfamily. D49 sub-subfamily. Homodimer. Ca(2+) serves as cofactor. In terms of tissue distribution, expressed by the venom gland.

Its subcellular location is the secreted. The catalysed reaction is a 1,2-diacyl-sn-glycero-3-phosphocholine + H2O = a 1-acyl-sn-glycero-3-phosphocholine + a fatty acid + H(+). Functionally, snake venom phospholipase A2 (PLA2) that is highly lipolytic and myolytic. PLA2 catalyzes the calcium-dependent hydrolysis of the 2-acyl groups in 3-sn-phosphoglycerides. The protein is Acidic phospholipase A2 1 of Protobothrops flavoviridis (Habu).